Consider the following 402-residue polypeptide: Eukaryotic initiation factor 4A (402 aa).

The short motif at 29–57 (ESFDDMELKEELLRGIYGFGFEKPSAIQK) is the Q motif element. The 171-residue stretch at 60-230 (IVPCTTGKDV…NRFMRNPIRI (171 aa)) folds into the Helicase ATP-binding domain. 73–80 (AQSGTGKT) contributes to the ATP binding site. The DEAD box signature appears at 178-181 (DEAD). The Helicase C-terminal domain occupies 241-402 (GIRQFYINVQ…EMPESIADLI (162 aa)).

The protein belongs to the DEAD box helicase family. eIF4A subfamily. In terms of assembly, eIF4F is a multi-subunit complex, the composition of which varies with external and internal environmental conditions. It is composed of at least EIF4A, EIF4E and EIF4G.

The enzyme catalyses ATP + H2O = ADP + phosphate + H(+). In terms of biological role, ATP-dependent RNA helicase which is a subunit of the eIF4F complex involved in cap recognition and is required for mRNA binding to ribosome. In the current model of translation initiation, eIF4A unwinds RNA secondary structures in the 5'-UTR of mRNAs which is necessary to allow efficient binding of the small ribosomal subunit, and subsequent scanning for the initiator codon. The sequence is that of Eukaryotic initiation factor 4A (inf-1) from Caenorhabditis elegans.